The sequence spans 85 residues: MKLLLLLTISASMLIEGLVNADGYIRGGDGCKVSCVINHVFCDNECKAAGGSYGYCWAWGLACWCEGLPADREWDYETNTCGGKK.

An N-terminal signal peptide occupies residues 1–21; that stretch reads MKLLLLLTISASMLIEGLVNA. Residues 22–82 enclose the LCN-type CS-alpha/beta domain; that stretch reads DGYIRGGDGC…EWDYETNTCG (61 aa). 4 disulfides stabilise this stretch: Cys31/Cys81, Cys35/Cys56, Cys42/Cys63, and Cys46/Cys65. Gly82 is modified (glycine amide).

The protein belongs to the long (4 C-C) scorpion toxin superfamily. Sodium channel inhibitor family. Beta subfamily. As to expression, expressed by the venom gland.

It is found in the secreted. In terms of biological role, depressant insect beta-toxins cause a transient contraction paralysis followed by a slow flaccid paralysis. They bind voltage-independently at site-4 of sodium channels (Nav) and block action potentials, primarily by depolarizing the axonal membrane and suppressing the sodium current. This depressant toxin is active only on insects. It is found in a relatively small amount in the venom, and its activity on insects is 10-fold higher compared to other known depressant toxins. The chain is Beta-insect depressant toxin Lqh-dprIT3a from Leiurus hebraeus (Hebrew deathstalker scorpion).